Here is a 522-residue protein sequence, read N- to C-terminus: Nitrogen fixation protein VnfA (522 aa).

The tract at residues 22-183 (LLYEMSQIAT…AQAVELYLVE (162 aa)) is a domain. Residues 35 to 177 (DLSSIISILL…ILATTTAQAV (143 aa)) form the GAF domain. In terms of domain architecture, Sigma-54 factor interaction spans 210 to 439 (IIGNSKPMLE…LENVIERAML (230 aa)). Residues 238–245 (GESGVGKE) and 301–310 (AAGGTIFLDE) contribute to the ATP site. Residues 493–512 (MTEAATHLGLTARVLGLRMG) constitute a DNA-binding region (H-T-H motif).

Functionally, required for the expression of the V-dependent nitrogen fixation system in Azotobacter vinelandii. It is required for the regulation of nitrogenase 2 transcription. Interacts with sigma-54. This is Nitrogen fixation protein VnfA (vnfA) from Azotobacter vinelandii.